Here is a 227-residue protein sequence, read N- to C-terminus: Cytidylate kinase (227 aa).

12-20 (GPSGAGKGT) contacts ATP.

This sequence belongs to the cytidylate kinase family. Type 1 subfamily.

The protein resides in the cytoplasm. It carries out the reaction CMP + ATP = CDP + ADP. The enzyme catalyses dCMP + ATP = dCDP + ADP. This Xanthomonas euvesicatoria pv. vesicatoria (strain 85-10) (Xanthomonas campestris pv. vesicatoria) protein is Cytidylate kinase.